Consider the following 278-residue polypeptide: Transmembrane protein 45B (278 aa).

7 helical membrane passes run 7–27, 49–69, 95–115, 117–137, 149–169, 183–203, and 215–235; these read HALP…KYPL, IIEG…EQFV, YLFF…FNIV, LGLD…LFYF, IHSL…LEVI, LLIL…PPFG, and VMFI…ITAI. Residues S273 and S275 each carry the phosphoserine modification.

The protein belongs to the TMEM45 family.

The protein resides in the endosome membrane. The protein localises to the lysosome membrane. It is found in the golgi apparatus. Its subcellular location is the trans-Golgi network membrane. Plays a role in innate immunity. This chain is Transmembrane protein 45B (Tmem45b), found in Rattus norvegicus (Rat).